The sequence spans 241 residues: 6-hydroxymethyl-7,8-dihydropterin pyrophosphokinase (241 aa).

The protein belongs to the archaeal 6-HMPDK family. It depends on Mg(2+) as a cofactor.

It carries out the reaction 6-hydroxymethyl-7,8-dihydropterin + ATP = (7,8-dihydropterin-6-yl)methyl diphosphate + AMP + H(+). It functions in the pathway cofactor biosynthesis; 5,6,7,8-tetrahydromethanopterin biosynthesis. Catalyzes the transfer of diphosphate from ATP to 6-hydroxymethyl-7,8-dihydropterin (6-HMD), leading to 6-hydroxymethyl-7,8-dihydropterin diphosphate (6-HMDP). In Methanocaldococcus jannaschii (strain ATCC 43067 / DSM 2661 / JAL-1 / JCM 10045 / NBRC 100440) (Methanococcus jannaschii), this protein is 6-hydroxymethyl-7,8-dihydropterin pyrophosphokinase.